The chain runs to 655 residues: Import motor subunit, mitochondrial (655 aa).

The N-terminal 23 residues, 1–23 (MLAAKNILNRSSLSSSFRIATRL), are a transit peptide targeting the mitochondrion. Thr-330 carries the phosphothreonine modification. A disordered region spans residues 629–655 (EQLYKNDSNNNNNNNNGNNAESDETKQ). Residues 637–647 (NNNNNNNNGNN) are compositionally biased toward low complexity.

Belongs to the heat shock protein 70 family. In terms of assembly, component of the PAM complex, at least composed of SSC1 (mtHsp70), MGE1, TIM44, PAM16/TIM16, PAM17 and PAM18/TIM14. In the complex, SSC1 interacts directly with PAM18 and TIM44. Interacts with NAP1. Component of endonuclease SceI (endo.SceI), which is a heterodimer of ENS2 and SSC1.

It is found in the mitochondrion matrix. The enzyme catalyses ATP + H2O = ADP + phosphate + H(+). In terms of biological role, essential component of the PAM complex, a complex required for the translocation of transit peptide-containing proteins from the inner membrane into the mitochondrial matrix in an ATP-dependent manner. Constitutes the ATP-driven core of the motor and binds the precursor preprotein. Required for the import of the processed frataxin homolog YFH1 into the mitochondrion. Functionally, acts as a non-catalytic component of endonuclease SceI (endo.SceI), which cleaves specifically at multiple sites on mitochondrial DNA and produces double-stranded breaks. SSC1 confers broader sequence specificity, greater stability, and higher activity on the catalytic subunit. This chain is Import motor subunit, mitochondrial, found in Saccharomyces cerevisiae (Baker's yeast).